Consider the following 78-residue polypeptide: Antitoxin VapB2 (78 aa).

Residues 4–44 (AKIFMNGQSQAVRLPKEFRFSVKEVSVIPLGKGIVLQPLPN) form the SpoVT-AbrB domain.

The protein belongs to the VapB family. In terms of assembly, forms complexes with VapC2; probably VapC2(4):VapB2(2) in the absence of DNA, and VapC2(4):VapB2(4) in the presence of DNA. Crystallizes as heterodimers with stoichiometry VapC2(4):VapB2(4) in the presence of its probable promoter DNA. The heterodimers are in contact via alternative VapC-VapC and VapB-VapB interactions. This subunit contacts DNA.

Functionally, antitoxin component of a type II toxin-antitoxin (TA) system. Upon expression in E.coli or S.cerevisiae neutralizes the effect of cognate toxin VapC2, partially inhibits the RNase activity of VapC2. This is Antitoxin VapB2 (vapB2) from Rickettsia felis (strain ATCC VR-1525 / URRWXCal2) (Rickettsia azadi).